We begin with the raw amino-acid sequence, 795 residues long: Mitochondrial intermediate peptidase (795 aa).

Residues 1 to 22 constitute a mitochondrion transit peptide; sequence MLKTLNRRSWTCRQCIRILRRN. H561 serves as a coordination point for Zn(2+). E562 is an active-site residue. Residues H565 and H568 each contribute to the Zn(2+) site.

This sequence belongs to the peptidase M3 family. The cofactor is Zn(2+).

The protein resides in the mitochondrion matrix. It carries out the reaction Release of an N-terminal octapeptide as second stage of processing of some proteins imported into the mitochondrion.. In terms of biological role, cleaves proteins, imported into the mitochondrion, to their mature size. While most mitochondrial precursor proteins are processed to the mature form in one step by mitochondrial processing peptidase (MPP), the sequential cleavage by MIP of an octapeptide after initial processing by MPP is a required step for a subgroup of nuclear-encoded precursor proteins destined for the matrix or the inner membrane. The polypeptide is Mitochondrial intermediate peptidase (OCT1) (Coccidioides immitis (strain RS) (Valley fever fungus)).